The following is an 89-amino-acid chain: Defensin-like protein 197 (89 aa).

The first 26 residues, Met-1–Ala-26, serve as a signal peptide directing secretion. Disulfide bonds link Cys-33–Cys-86, Cys-46–Cys-70, Cys-55–Cys-81, and Cys-59–Cys-83.

Belongs to the DEFL family. Protease inhibitor I18 (RTI/MTI-2) subfamily.

Its subcellular location is the secreted. This Arabidopsis thaliana (Mouse-ear cress) protein is Defensin-like protein 197 (ATTI6).